Consider the following 327-residue polypeptide: Aspartate carbamoyltransferase catalytic subunit (327 aa).

Residues R54 and T55 each contribute to the carbamoyl phosphate site. Residue K82 coordinates L-aspartate. Carbamoyl phosphate is bound by residues R104, H134, and Q137. L-aspartate contacts are provided by R177 and R232. Positions 280 and 281 each coordinate carbamoyl phosphate.

Belongs to the aspartate/ornithine carbamoyltransferase superfamily. ATCase family. In terms of assembly, heterododecamer (2C3:3R2) of six catalytic PyrB chains organized as two trimers (C3), and six regulatory PyrI chains organized as three dimers (R2).

The catalysed reaction is carbamoyl phosphate + L-aspartate = N-carbamoyl-L-aspartate + phosphate + H(+). The protein operates within pyrimidine metabolism; UMP biosynthesis via de novo pathway; (S)-dihydroorotate from bicarbonate: step 2/3. Catalyzes the condensation of carbamoyl phosphate and aspartate to form carbamoyl aspartate and inorganic phosphate, the committed step in the de novo pyrimidine nucleotide biosynthesis pathway. The sequence is that of Aspartate carbamoyltransferase catalytic subunit from Micrococcus luteus (strain ATCC 4698 / DSM 20030 / JCM 1464 / CCM 169 / CCUG 5858 / IAM 1056 / NBRC 3333 / NCIMB 9278 / NCTC 2665 / VKM Ac-2230) (Micrococcus lysodeikticus).